Reading from the N-terminus, the 377-residue chain is Chaperone protein DnaJ (377 aa).

The region spanning 5–70 (DYYQILGIPK…EKRSAYDQYG (66 aa)) is the J domain. The segment at 132-210 (GIKKEIQIPT…CHGQGRVETY (79 aa)) adopts a CR-type zinc-finger fold. The Zn(2+) site is built by cysteine 145, cysteine 148, cysteine 162, cysteine 165, cysteine 184, cysteine 187, cysteine 198, and cysteine 201. CXXCXGXG motif repeat units follow at residues 145 to 152 (CKTCYGSG), 162 to 169 (CSTCHGKG), 184 to 191 (CPTCHGKG), and 198 to 205 (CNLCHGQG).

The protein belongs to the DnaJ family. Homodimer. Requires Zn(2+) as cofactor.

The protein resides in the cytoplasm. Its function is as follows. Participates actively in the response to hyperosmotic and heat shock by preventing the aggregation of stress-denatured proteins and by disaggregating proteins, also in an autonomous, DnaK-independent fashion. Unfolded proteins bind initially to DnaJ; upon interaction with the DnaJ-bound protein, DnaK hydrolyzes its bound ATP, resulting in the formation of a stable complex. GrpE releases ADP from DnaK; ATP binding to DnaK triggers the release of the substrate protein, thus completing the reaction cycle. Several rounds of ATP-dependent interactions between DnaJ, DnaK and GrpE are required for fully efficient folding. Also involved, together with DnaK and GrpE, in the DNA replication of plasmids through activation of initiation proteins. The protein is Chaperone protein DnaJ of Buchnera aphidicola subsp. Acyrthosiphon pisum (strain Tuc7).